We begin with the raw amino-acid sequence, 482 residues long: O-methyltransferase tpcA (482 aa).

S-adenosyl-L-methionine contacts are provided by residues 293 to 294 (GG), D316, 348 to 349 (SF), and R364. H368 functions as the Proton acceptor in the catalytic mechanism.

Belongs to the class I-like SAM-binding methyltransferase superfamily. Cation-independent O-methyltransferase family. Specifically expressed in conidia.

The protein operates within secondary metabolite biosynthesis. Its function is as follows. O-methyltransferase; part of the gene cluster that mediates the biosynthesis of trypacidin, a mycotoxin with antiprotozoal activity and that plays a role in the infection process. The pathway begins with the synthesis of atrochrysone thioester by the polyketide synthase (PKS) tpcC. The atrochrysone carboxyl ACP thioesterase tpcB then breaks the thioester bond and releases the atrochrysone carboxylic acid from tpcC. The decarboxylase tpcK converts atrochrysone carboxylic acid to atrochrysone which is further reduced into emodin anthrone. The next step is performed by the emodin anthrone oxygenase tpcL that catalyzes the oxidation of emodinanthrone to emodin. Emodin O-methyltransferase encoded by tpcA catalyzes methylation of the 8-hydroxy group of emodin to form questin. Ring cleavage of questin by questin oxidase tpcI leads to desmethylsulochrin via several intermediates including questin epoxide. Another methylation step catalyzed by tpcM leads to the formation of sulochrin which is further converted to monomethylsulfochrin by tpcH. Finally, the tpcJ catalyzes the conversion of monomethylsulfochrin to trypacidin. Trypacidin is toxic for human pulmonary and bronchial epithelial cells by initiating the intracellular formation of nitric oxide (NO) and hydrogen peroxide (H(2)O(2)), thus triggering host necrotic cell death. The trypacidin pathway is also able to produce endocrocin via a distinct route from the endocrocin Enc pathway. The polypeptide is O-methyltransferase tpcA (Aspergillus fumigatus (strain ATCC MYA-4609 / CBS 101355 / FGSC A1100 / Af293) (Neosartorya fumigata)).